Here is a 129-residue protein sequence, read N- to C-terminus: Small ribosomal subunit protein uS11 (129 aa).

Belongs to the universal ribosomal protein uS11 family. Part of the 30S ribosomal subunit. Interacts with proteins S7 and S18. Binds to IF-3.

Its function is as follows. Located on the platform of the 30S subunit, it bridges several disparate RNA helices of the 16S rRNA. Forms part of the Shine-Dalgarno cleft in the 70S ribosome. The polypeptide is Small ribosomal subunit protein uS11 (Mycoplasma mycoides subsp. mycoides SC (strain CCUG 32753 / NCTC 10114 / PG1)).